The chain runs to 176 residues: Late lactation protein A (176 aa).

The signal sequence occupies residues 1 to 18 (MRVLFLTISLSLFSIIHA). Cys-78 and Cys-171 are disulfide-bonded.

The protein belongs to the calycin superfamily. Lipocalin family. In terms of tissue distribution, mammary gland specific. Secreted in milk.

Its subcellular location is the secreted. Functionally, probably serves a role in the transport of a small ligand released during the hydrolysis of milk fat. In Notamacropus eugenii (Tammar wallaby), this protein is Late lactation protein A (LLPA).